We begin with the raw amino-acid sequence, 84 residues long: Large ribosomal subunit protein eL34 (84 aa).

This sequence belongs to the eukaryotic ribosomal protein eL34 family.

This Pyrobaculum islandicum (strain DSM 4184 / JCM 9189 / GEO3) protein is Large ribosomal subunit protein eL34.